We begin with the raw amino-acid sequence, 327 residues long: Annexin A8 (327 aa).

Annexin repeat units follow at residues Phe-21–Tyr-92, Pro-93–Gln-164, Gly-177–Lys-249, and Asn-253–Gly-324. The Ca(2+) site is built by Met-266, Gly-268, Gly-270, and Asp-310.

This sequence belongs to the annexin family.

In terms of biological role, this protein is an anticoagulant protein that acts as an indirect inhibitor of the thromboplastin-specific complex, which is involved in the blood coagulation cascade. This is Annexin A8 from Homo sapiens (Human).